The following is an 82-amino-acid chain: MSGTIPHFWAQPFRYIRWSAREKPAYFYSCVIAGLGPVFLTVVPPVRKYFGDVNPAPIPVTYPIPTGPRKQLTGYDDDTEEA.

The helical transmembrane segment at 25-43 (AYFYSCVIAGLGPVFLTVV) threads the bilayer.

It belongs to the complex I NDUFA3 subunit family. Complex I is composed of about 40 different subunits.

Its subcellular location is the mitochondrion inner membrane. Functionally, accessory subunit of the mitochondrial membrane respiratory chain NADH dehydrogenase (Complex I), that is believed not to be involved in catalysis. Complex I functions in the transfer of electrons from NADH to the respiratory chain. The immediate electron acceptor for the enzyme is believed to be ubiquinone. This subunit binds ubiquinone. This Neurospora crassa (strain ATCC 24698 / 74-OR23-1A / CBS 708.71 / DSM 1257 / FGSC 987) protein is NADH-ubiquinone oxidoreductase 9.5 kDa subunit (nuo9.5).